The following is a 91-amino-acid chain: uncharacterized protein (91 aa).

2 helical membrane-spanning segments follow: residues 22–42 (WPVI…AFVV) and 53–73 (VAGL…LAAA).

The protein localises to the cell membrane. This is an uncharacterized protein from Mycobacterium bovis (strain ATCC BAA-935 / AF2122/97).